The chain runs to 279 residues: Urease accessory protein UreD (279 aa).

It belongs to the UreD family. As to quaternary structure, ureD, UreF and UreG form a complex that acts as a GTP-hydrolysis-dependent molecular chaperone, activating the urease apoprotein by helping to assemble the nickel containing metallocenter of UreC. The UreE protein probably delivers the nickel.

Its subcellular location is the cytoplasm. Required for maturation of urease via the functional incorporation of the urease nickel metallocenter. The protein is Urease accessory protein UreD of Trichormus variabilis (strain ATCC 29413 / PCC 7937) (Anabaena variabilis).